Here is a 124-residue protein sequence, read N- to C-terminus: Small ribosomal subunit protein uS11 (124 aa).

Belongs to the universal ribosomal protein uS11 family. Part of the 30S ribosomal subunit. Interacts with proteins S7 and S18. Binds to IF-3.

Functionally, located on the platform of the 30S subunit, it bridges several disparate RNA helices of the 16S rRNA. Forms part of the Shine-Dalgarno cleft in the 70S ribosome. The protein is Small ribosomal subunit protein uS11 of Anaplasma phagocytophilum (strain HZ).